The sequence spans 432 residues: Glutamyl-tRNA reductase (432 aa).

Substrate-binding positions include 55–58 (TCNR), Ser114, 119–121 (ETQ), and Gln125. Cys56 acts as the Nucleophile in catalysis. Residue 194–199 (GAGEMI) coordinates NADP(+).

The protein belongs to the glutamyl-tRNA reductase family. Homodimer.

The enzyme catalyses (S)-4-amino-5-oxopentanoate + tRNA(Glu) + NADP(+) = L-glutamyl-tRNA(Glu) + NADPH + H(+). Its pathway is porphyrin-containing compound metabolism; protoporphyrin-IX biosynthesis; 5-aminolevulinate from L-glutamyl-tRNA(Glu): step 1/2. Catalyzes the NADPH-dependent reduction of glutamyl-tRNA(Glu) to glutamate 1-semialdehyde (GSA). The sequence is that of Glutamyl-tRNA reductase from Burkholderia cenocepacia (strain ATCC BAA-245 / DSM 16553 / LMG 16656 / NCTC 13227 / J2315 / CF5610) (Burkholderia cepacia (strain J2315)).